Reading from the N-terminus, the 453-residue chain is Tubulin alpha-2 chain (453 aa).

Gln11 contributes to the GTP binding site. N6-acetyllysine is present on Lys40. Residues Glu71, Gly144, Thr145, Thr179, Asn206, and Asn228 each contribute to the GTP site. Position 71 (Glu71) interacts with Mg(2+). Residue Glu254 is part of the active site. The tract at residues 432-453 (YEEVGAETAEGEGEEEDFGEEY) is disordered.

It belongs to the tubulin family. In terms of assembly, dimer of alpha and beta chains. A typical microtubule is a hollow water-filled tube with an outer diameter of 25 nm and an inner diameter of 15 nM. Alpha-beta heterodimers associate head-to-tail to form protofilaments running lengthwise along the microtubule wall with the beta-tubulin subunit facing the microtubule plus end conferring a structural polarity. Microtubules usually have 13 protofilaments but different protofilament numbers can be found in some organisms and specialized cells. Requires Mg(2+) as cofactor. In terms of processing, undergoes a tyrosination/detyrosination cycle, the cyclic removal and re-addition of a C-terminal tyrosine residue by the enzymes tubulin tyrosine carboxypeptidase (TTCP) and tubulin tyrosine ligase (TTL), respectively. Post-translationally, acetylation of alpha chains at Lys-40 stabilizes microtubules and affects affinity and processivity of microtubule motors. This modification has a role in multiple cellular functions, ranging from cell motility, cell cycle progression or cell differentiation to intracellular trafficking and signaling.

Its subcellular location is the cytoplasm. It localises to the cytoskeleton. It carries out the reaction GTP + H2O = GDP + phosphate + H(+). Functionally, tubulin is the major constituent of microtubules, a cylinder consisting of laterally associated linear protofilaments composed of alpha- and beta-tubulin heterodimers. Microtubules grow by the addition of GTP-tubulin dimers to the microtubule end, where a stabilizing cap forms. Below the cap, tubulin dimers are in GDP-bound state, owing to GTPase activity of alpha-tubulin. The sequence is that of Tubulin alpha-2 chain (TUBA2) from Pelvetia fastigiata (Brown alga).